Consider the following 248-residue polypeptide: UPF0246 protein RF_0769 (248 aa).

The protein belongs to the UPF0246 family.

The protein is UPF0246 protein RF_0769 of Rickettsia felis (strain ATCC VR-1525 / URRWXCal2) (Rickettsia azadi).